The primary structure comprises 276 residues: Large ribosomal subunit protein uL2 (276 aa).

The interval 223 to 276 (VVMNPVDHPHGGGEGKSSGGRHPVSPWGKKTRGPKTRNNKVTDRLIIRRRNAKR) is disordered. The segment covering 251-260 (KKTRGPKTRN) has biased composition (basic residues).

This sequence belongs to the universal ribosomal protein uL2 family. As to quaternary structure, part of the 50S ribosomal subunit. Forms a bridge to the 30S subunit in the 70S ribosome.

Its function is as follows. One of the primary rRNA binding proteins. Required for association of the 30S and 50S subunits to form the 70S ribosome, for tRNA binding and peptide bond formation. It has been suggested to have peptidyltransferase activity; this is somewhat controversial. Makes several contacts with the 16S rRNA in the 70S ribosome. The sequence is that of Large ribosomal subunit protein uL2 from Hyphomonas neptunium (strain ATCC 15444).